We begin with the raw amino-acid sequence, 1120 residues long: Transcriptional repressor NF-X1 (1120 aa).

The segment at 9–26 is interaction with PABPC1 and PABC4; it reads GTFKFNTDAAEFIPQEKK. The interval 22 to 295 is disordered; the sequence is PQEKKNSGLN…LNERPAKSTC (274 aa). Residues Ser50, Ser82, and Ser95 each carry the phosphoserine modification. A compositionally biased stretch (polar residues) spans 73-106; that stretch reads YHPSGSKPKSQQTSFQSSPCNKSPKSHGLQNQPW. Positions 111 to 120 are enriched in basic residues; that stretch reads NEKHHIRVKK. The span at 124–141 shows a compositional bias: polar residues; sequence LAEQTSDTAGLESSTRSE. Phosphoserine is present on residues Ser129 and Ser150. Basic and acidic residues-rich tracts occupy residues 142–159, 188–202, 222–254, and 282–291; these read SGTD…KEVV, LKCE…KPED, SSRK…EGAR, and PKDDLNERPA. Ser326 bears the Phosphoserine mark. The RING-type; atypical zinc-finger motif lies at 358–409; the sequence is CMVCCELVRVTAPVWSCQSCYHVFHLNCIKKWARSPASQADGQSGWRCPACQ. NF-X1-type zinc fingers lie at residues 453–471, 506–525, 567–586, 632–655, 694–713, 721–740, 832–854, and 863–884; these read CPHS…PCPA, CGQH…PCQI, CGNH…QCPR, CGSL…PCSR, CGRH…KCPL, CGLH…TCWQ, CGMH…PCKQ, and CGHP…ACKA. The R3H domain occupies 994–1062; sequence LKFVSDVEKE…KRNVVVTAIR (69 aa). Positions 1081-1109 are disordered; sequence QARPPPPIPHHRHQSDKNPGSSNLQKITK. Polar residues predominate over residues 1097-1106; sequence KNPGSSNLQK.

It belongs to the NFX1 family. As to quaternary structure, isoform 1 interacts with PABPC1 and PABPC4. In terms of assembly, (Microbial infection) Isoform 1 and isoform 3 interact with human papillomavirus (HPV) type-16 E6 oncoprotein. Post-translationally, isoform 3 is polyubiquitinated in the presence of HPV16 E6 protein; which leads to proteasomal degradation. Isoform 1 is not polyubiquitinated.

It localises to the nucleus. Binds to the X-box motif of MHC class II genes and represses their expression. May play an important role in regulating the duration of an inflammatory response by limiting the period in which MHC class II molecules are induced by interferon-gamma. Isoform 3 binds to the X-box motif of TERT promoter and represses its expression. Together with PABPC1 or PABPC4, isoform 1 acts as a coactivator for TERT expression. Mediates E2-dependent ubiquitination. This is Transcriptional repressor NF-X1 (NFX1) from Homo sapiens (Human).